Reading from the N-terminus, the 760-residue chain is Cyclin-D-binding Myb-like transcription factor 1 (760 aa).

The interval 1 to 237 (MSTVEEDSDT…TPEEIEKLKE (237 aa)) is interaction with CCND2. The disordered stretch occupies residues 24–63 (DTDGNLILHCPQNDPDEIDSEDSTEPPHKRLCLSSEDDQS). Residues 37–47 (DPDEIDSEDST) are compositionally biased toward acidic residues. The segment at 87–170 (VTMTATTEVA…IDILMNNIER (84 aa)) is required for transcriptional activation. The required for DNA-binding stretch occupies residues 87–458 (VTMTATTEVA…DNTAISPSPM (372 aa)). The interval 176–690 (GIKDATEIIF…PTIVHQVHQT (515 aa)) is interaction with CCND1, CCND2 and CCND3. Positions 225–263 (GKYTPEEIEKLKELRIKHGNDWATIGAALGRSASSVKDR) constitute a Myb-like 1 domain. An HTH myb-type domain is found at 268–333 (KDTCNTGKWT…KWLNYLNWKQ (66 aa)). Residues 306-329 (WAAVAERVGTRSEKQCRSKWLNYL) constitute a DNA-binding region (H-T-H motif). The Myb-like 2 domain maps to 339–388 (WTKEDEINLILRIAELDVADENDINWDLLAEGWSSVRSPQWLRSKWWTIK). Positions 459-760 (AALQIPVQIT…KDVEDLVNCH (302 aa)) are required for transcriptional activation. Disordered stretches follow at residues 593-614 (DSDL…DTFP) and 738-760 (IGSS…VNCH).

It belongs to the DMTF1 family. In terms of assembly, interacts with the D-type cyclins CCND1, CCND2 and CCND3. Interaction with D-type cyclins may modulate transcriptional activation by this protein. Post-translationally, phosphorylated by the cyclin-D2/CDK4, cyclin-D3/CDK4 and cyclin-D2/CDK6 complexes and to a lesser extent by the cyclin-D1/CDK4 complex.

It localises to the nucleus. Its function is as follows. Transcriptional activator which activates the CDKN2A/ARF locus in response to Ras-Raf signaling, thereby promoting p53/TP53-dependent growth arrest. Binds to the consensus sequence 5'-CCCG[GT]ATGT-3'. In Rattus norvegicus (Rat), this protein is Cyclin-D-binding Myb-like transcription factor 1 (Dmtf1).